Consider the following 1242-residue polypeptide: ATP-dependent helicase/nuclease subunit A (1242 aa).

One can recognise a UvrD-like helicase ATP-binding domain in the interval 12–487 (SRWTDEQWKA…IDLASNFRSR (476 aa)). 33–40 (AAAGSGKT) lines the ATP pocket. In terms of domain architecture, UvrD-like helicase C-terminal spans 514–808 (AAQLKYGADY…RIMTIHSSKG (295 aa)).

Belongs to the helicase family. AddA subfamily. In terms of assembly, heterodimer of AddA and AddB/RexB. The cofactor is Mg(2+).

It catalyses the reaction Couples ATP hydrolysis with the unwinding of duplex DNA by translocating in the 3'-5' direction.. The enzyme catalyses ATP + H2O = ADP + phosphate + H(+). Its function is as follows. The heterodimer acts as both an ATP-dependent DNA helicase and an ATP-dependent, dual-direction single-stranded exonuclease. Recognizes the chi site generating a DNA molecule suitable for the initiation of homologous recombination. The AddA nuclease domain is required for chi fragment generation; this subunit has the helicase and 3' -&gt; 5' nuclease activities. The sequence is that of ATP-dependent helicase/nuclease subunit A from Geobacillus kaustophilus (strain HTA426).